The primary structure comprises 419 residues: Probable pectate lyase C (419 aa).

An N-terminal signal peptide occupies residues 1 to 19; it reads MRLTPSLISCLSLLHFTSA. N-linked (GlcNAc...) asparagine glycosylation is found at Asn48, Asn164, and Asn201. Residue Arg204 is part of the active site. The EF-hand domain occupies 261-296; the sequence is NENFHAYVETNYYDSDKDGTLNGSELGVDSTNYGGM. Asp274, Asp276, Asp278, and Thr280 together coordinate Ca(2+). An N-linked (GlcNAc...) asparagine glycan is attached at Asn282. Glu285 contributes to the Ca(2+) binding site. Positions 352-395 are disordered; sequence ISDEADMGGAGDLDQGTTPTDTDGDGIPDDAEAELGTDPNTADS. Low complexity predominate over residues 363 to 372; sequence DLDQGTTPTD. Acidic residues predominate over residues 373 to 386; that stretch reads TDGDGIPDDAEAEL.

It belongs to the polysaccharide lyase 1 family. Requires Ca(2+) as cofactor.

Its subcellular location is the secreted. It catalyses the reaction Eliminative cleavage of (1-&gt;4)-alpha-D-galacturonan to give oligosaccharides with 4-deoxy-alpha-D-galact-4-enuronosyl groups at their non-reducing ends.. Functionally, pectinolytic enzyme consist of four classes of enzymes: pectin lyase, polygalacturonase, pectin methylesterase and rhamnogalacturonase. Among pectinolytic enzymes, pectin lyase is the most important in depolymerization of pectin, since it cleaves internal glycosidic bonds of highly methylated pectins. Favors pectate, the anion, over pectin, the methyl ester. The sequence is that of Probable pectate lyase C (plyC) from Aspergillus oryzae (strain ATCC 42149 / RIB 40) (Yellow koji mold).